The chain runs to 428 residues: GTPase HflX (428 aa).

In terms of domain architecture, Hflx-type G spans 214–374 (PVVAIVGYTN…AIERELFKET (161 aa)). GTP contacts are provided by residues 220–227 (GYTNAGKS), 245–249 (FATLD), 267–270 (DTVG), 333–336 (NKID), and 352–354 (SAK). Serine 227 and threonine 247 together coordinate Mg(2+).

It belongs to the TRAFAC class OBG-HflX-like GTPase superfamily. HflX GTPase family. Monomer. Associates with the 50S ribosomal subunit. It depends on Mg(2+) as a cofactor.

The protein localises to the cytoplasm. Its function is as follows. GTPase that associates with the 50S ribosomal subunit and may have a role during protein synthesis or ribosome biogenesis. The sequence is that of GTPase HflX from Caldanaerobacter subterraneus subsp. tengcongensis (strain DSM 15242 / JCM 11007 / NBRC 100824 / MB4) (Thermoanaerobacter tengcongensis).